Reading from the N-terminus, the 533-residue chain is Calcium-dependent protein kinase 12 (533 aa).

The tract at residues 1 to 77 (MGNCFTKTYE…RASGGGGEMG (77 aa)) is disordered. Gly-2 carries the N-myristoyl glycine lipid modification. The segment covering 26–38 (ERSKARGGDEPGT) has biased composition (basic and acidic residues). The span at 57-69 (GSSSAAGALSRRA) shows a compositional bias: low complexity. In terms of domain architecture, Protein kinase spans 91–349 (YQLDRKLGSG…ASQALEHRWL (259 aa)). ATP contacts are provided by residues 97-105 (LGSGQFGTT) and Lys-120. Asp-215 (proton acceptor) is an active-site residue. Residues 354 to 384 (ASDRPIDSAVLSRMKQFKAMNKLKQLALKVI) form an autoinhibitory domain region. 4 EF-hand domains span residues 391-426 (EEIK…LGSR), 427-462 (ISEA…KHKL), 463-498 (EKEE…YGMG), and 499-533 (DEAN…GIQT). Residues Asp-404, Asp-406, Ser-408, Thr-410, Glu-415, Asp-440, Asp-442, Ser-444, Ser-446, Glu-451, Asp-476, Asp-478, Ser-480, Tyr-482, Glu-487, Asp-511, Asp-513, Asp-515, Arg-517, and Glu-522 each coordinate Ca(2+).

Belongs to the protein kinase superfamily. Ser/Thr protein kinase family. CDPK subfamily. In terms of tissue distribution, expressed in roots, leaf blades and developing seeds. Expressed in vascular tissues of roots and leaf blades. Expressed in the phloem tissue of the large vascular bundle in leaf blades.

It localises to the membrane. The catalysed reaction is L-seryl-[protein] + ATP = O-phospho-L-seryl-[protein] + ADP + H(+). It carries out the reaction L-threonyl-[protein] + ATP = O-phospho-L-threonyl-[protein] + ADP + H(+). Its activity is regulated as follows. Activated by calcium. Autophosphorylation may play an important role in the regulation of the kinase activity. May play a role in signal transduction pathways that involve calcium as a second messenger. Functions in signal transduction pathways that positively regulate responses to low-nitrogen. Functions in multiple signaling pathways, positively regulating salt tolerance and negatively modulating rice blast fungus resistance. May promote tolerance to salt stress by negatively regulating NADPH oxidase and positively regulating reactive oxygen species (ROS) scavengers. The chain is Calcium-dependent protein kinase 12 from Oryza sativa subsp. japonica (Rice).